The primary structure comprises 141 residues: Nucleoside diphosphate kinase (141 aa).

ATP-binding residues include K11, F59, R87, T93, R104, and N114. The active-site Pros-phosphohistidine intermediate is H117.

Belongs to the NDK family. As to quaternary structure, homotetramer. It depends on Mg(2+) as a cofactor.

It is found in the cytoplasm. The enzyme catalyses a 2'-deoxyribonucleoside 5'-diphosphate + ATP = a 2'-deoxyribonucleoside 5'-triphosphate + ADP. It carries out the reaction a ribonucleoside 5'-diphosphate + ATP = a ribonucleoside 5'-triphosphate + ADP. Major role in the synthesis of nucleoside triphosphates other than ATP. The ATP gamma phosphate is transferred to the NDP beta phosphate via a ping-pong mechanism, using a phosphorylated active-site intermediate. This is Nucleoside diphosphate kinase from Pseudomonas fluorescens (strain ATCC BAA-477 / NRRL B-23932 / Pf-5).